The sequence spans 766 residues: Subtilisin-like protease SBT4.15 (766 aa).

Residues 1-23 (MVSNQRVRLFMLCFCLVNNAVIA) form the signal peptide. Positions 24 to 113 (ATEDENVERK…VFKNTQRQLH (90 aa)) are cleaved as a propeptide — activation peptide. The region spanning 35–113 (YIVYMGEATE…VFKNTQRQLH (79 aa)) is the Inhibitor I9 domain. The region spanning 117 to 601 (SWDFLGLVES…SGQINPRRAI (485 aa)) is the Peptidase S8 domain. The active-site Charge relay system is Asp-144. A glycan (N-linked (GlcNAc...) asparagine) is linked at Asn-175. The active-site Charge relay system is His-210. N-linked (GlcNAc...) asparagine glycans are attached at residues Asn-233, Asn-376, and Asn-465. Residues 365–460 (MYPLTSGSLA…YVFFEDGTKI (96 aa)) form the PA domain. Ser-543 functions as the Charge relay system in the catalytic mechanism. N-linked (GlcNAc...) asparagine glycans are attached at residues Asn-624, Asn-638, and Asn-668.

The protein belongs to the peptidase S8 family. The C-terminal propeptide is autocleaved.

Its subcellular location is the secreted. The chain is Subtilisin-like protease SBT4.15 from Arabidopsis thaliana (Mouse-ear cress).